The following is a 223-amino-acid chain: Uracil-DNA glycosylase (223 aa).

Aspartate 66 functions as the Proton acceptor in the catalytic mechanism.

The protein belongs to the uracil-DNA glycosylase (UDG) superfamily. UNG family.

It is found in the cytoplasm. The enzyme catalyses Hydrolyzes single-stranded DNA or mismatched double-stranded DNA and polynucleotides, releasing free uracil.. Excises uracil residues from the DNA which can arise as a result of misincorporation of dUMP residues by DNA polymerase or due to deamination of cytosine. This is Uracil-DNA glycosylase from Sulfurimonas denitrificans (strain ATCC 33889 / DSM 1251) (Thiomicrospira denitrificans (strain ATCC 33889 / DSM 1251)).